A 247-amino-acid chain; its full sequence is 2,3-bisphosphoglycerate-dependent phosphoglycerate mutase (247 aa).

Substrate is bound by residues 8-15, 21-22, arginine 60, 87-90, lysine 98, 114-115, and 183-184; these read RHGESVWN, TG, ERHY, RR, and GN. Catalysis depends on histidine 9, which acts as the Tele-phosphohistidine intermediate. The active-site Proton donor/acceptor is the glutamate 87.

The protein belongs to the phosphoglycerate mutase family. BPG-dependent PGAM subfamily. In terms of assembly, homodimer.

It catalyses the reaction (2R)-2-phosphoglycerate = (2R)-3-phosphoglycerate. Its pathway is carbohydrate degradation; glycolysis; pyruvate from D-glyceraldehyde 3-phosphate: step 3/5. Catalyzes the interconversion of 2-phosphoglycerate and 3-phosphoglycerate. The chain is 2,3-bisphosphoglycerate-dependent phosphoglycerate mutase from Geobacter sulfurreducens (strain ATCC 51573 / DSM 12127 / PCA).